The following is a 732-amino-acid chain: Guanylate cyclase soluble subunit alpha-2 (732 aa).

Positions 1-58 (MSRRKISSESFSSLGSDYLETSPEEEGECPLSRLCWNGSRSPPGPLEPSPAAAAAAAA) are disordered. Low complexity predominate over residues 49-58 (SPAAAAAAAA). A Guanylate cyclase domain is found at 521-648 (TMLFSDIVGF…NNVTLASKFE (128 aa)).

Belongs to the adenylyl cyclase class-4/guanylyl cyclase family. As to quaternary structure, heterodimer of an alpha and a beta chain. Isoform 1 is expressed in fetal brain, liver, colon, endothelium and testis. Isoform 2 is expressed only in liver, colon and endothelium.

It localises to the cytoplasm. It carries out the reaction GTP = 3',5'-cyclic GMP + diphosphate. With respect to regulation, activated by nitric oxide in the presence of magnesium or manganese ions. Has guanylyl cyclase on binding to the beta-1 subunit. Functionally, isoform 2 acts as a negative regulator of guanylyl cyclase activity as it forms non-functional heterodimers with the beta subunits. The chain is Guanylate cyclase soluble subunit alpha-2 (GUCY1A2) from Homo sapiens (Human).